Here is a 398-residue protein sequence, read N- to C-terminus: Probable RNA methyltransferase sce1580 (398 aa).

A disordered region spans residues 1–24 (MRVPEIPEETASPLRAGDPPAQVA). Glutamate 140 serves as the catalytic Proton acceptor. Positions 146-378 (GPARTTLCVS…TLVRRPRGRD (233 aa)) constitute a Radical SAM core domain. Cysteines 153 and 383 form a disulfide. [4Fe-4S] cluster is bound by residues cysteine 160, cysteine 164, and cysteine 167. Residues 211–212 (GE), serine 243, 265–267 (SLN), and asparagine 340 contribute to the S-adenosyl-L-methionine site. Cysteine 383 serves as the catalytic S-methylcysteine intermediate.

It belongs to the radical SAM superfamily. RlmN family. [4Fe-4S] cluster serves as cofactor.

It localises to the cytoplasm. The polypeptide is Probable RNA methyltransferase sce1580 (Sorangium cellulosum (strain So ce56) (Polyangium cellulosum (strain So ce56))).